Consider the following 106-residue polypeptide: ATP-dependent Clp protease adapter protein ClpS (106 aa).

The span at 1–13 (MGNNSTWSQSENL) shows a compositional bias: polar residues. The segment at 1 to 21 (MGNNSTWSQSENLTADKQKEK) is disordered.

It belongs to the ClpS family. As to quaternary structure, binds to the N-terminal domain of the chaperone ClpA.

In terms of biological role, involved in the modulation of the specificity of the ClpAP-mediated ATP-dependent protein degradation. The polypeptide is ATP-dependent Clp protease adapter protein ClpS (Pectobacterium carotovorum subsp. carotovorum (strain PC1)).